The sequence spans 467 residues: 3-isopropylmalate dehydratase large subunit (467 aa).

[4Fe-4S] cluster contacts are provided by cysteine 349, cysteine 409, and cysteine 412.

This sequence belongs to the aconitase/IPM isomerase family. LeuC type 1 subfamily. As to quaternary structure, heterodimer of LeuC and LeuD. [4Fe-4S] cluster is required as a cofactor.

The catalysed reaction is (2R,3S)-3-isopropylmalate = (2S)-2-isopropylmalate. It functions in the pathway amino-acid biosynthesis; L-leucine biosynthesis; L-leucine from 3-methyl-2-oxobutanoate: step 2/4. In terms of biological role, catalyzes the isomerization between 2-isopropylmalate and 3-isopropylmalate, via the formation of 2-isopropylmaleate. This Ruegeria sp. (strain TM1040) (Silicibacter sp.) protein is 3-isopropylmalate dehydratase large subunit.